A 339-amino-acid chain; its full sequence is Ketol-acid reductoisomerase (NADP(+)) (339 aa).

Residues 1 to 182 form the KARI N-terminal Rossmann domain; sequence MKVYYDSDAD…GGGRSGVIET (182 aa). NADP(+) contacts are provided by residues 24–27, arginine 48, serine 51, serine 53, and 83–86; these read YGSQ and DEHQ. Histidine 108 is an active-site residue. Residue glycine 134 coordinates NADP(+). The KARI C-terminal knotted domain maps to 183–328; the sequence is TFREEVETDL…ARLRKMMPWI (146 aa). Residues aspartate 191, glutamate 195, glutamate 227, and glutamate 231 each coordinate Mg(2+). Serine 252 lines the substrate pocket.

This sequence belongs to the ketol-acid reductoisomerase family. Requires Mg(2+) as cofactor.

It carries out the reaction (2R)-2,3-dihydroxy-3-methylbutanoate + NADP(+) = (2S)-2-acetolactate + NADPH + H(+). It catalyses the reaction (2R,3R)-2,3-dihydroxy-3-methylpentanoate + NADP(+) = (S)-2-ethyl-2-hydroxy-3-oxobutanoate + NADPH + H(+). It functions in the pathway amino-acid biosynthesis; L-isoleucine biosynthesis; L-isoleucine from 2-oxobutanoate: step 2/4. Its pathway is amino-acid biosynthesis; L-valine biosynthesis; L-valine from pyruvate: step 2/4. In terms of biological role, involved in the biosynthesis of branched-chain amino acids (BCAA). Catalyzes an alkyl-migration followed by a ketol-acid reduction of (S)-2-acetolactate (S2AL) to yield (R)-2,3-dihydroxy-isovalerate. In the isomerase reaction, S2AL is rearranged via a Mg-dependent methyl migration to produce 3-hydroxy-3-methyl-2-ketobutyrate (HMKB). In the reductase reaction, this 2-ketoacid undergoes a metal-dependent reduction by NADPH to yield (R)-2,3-dihydroxy-isovalerate. The chain is Ketol-acid reductoisomerase (NADP(+)) from Zymomonas mobilis subsp. mobilis (strain ATCC 31821 / ZM4 / CP4).